The sequence spans 310 residues: MNMHVDMGRALTVRDWPALEALAKTMPADAGARAMTDDDLRAAGVDRRVPEQKLGAAIDEFASLRLPDRIDGRFVDGRRANLTVFDDARVAVRGHARAQRNLLERLETELLGGTLDTAGDEGGIQPDPILQGLVDVIGQGKSDIDAYATIVEGLTKYFQSVADVMSKLQDYISAKDDKNMKIDGGKIKALIQQVIDHLPTMQLPKGADIARWRKELGDAVSISDSGVVTINPDKLIKMRDSLPPDGTVWDTARYQAWNTAFSGQKDNIQNDVQTLVEKYSHQNSNFDNLVKVLSGAISTLTDTAKSYLQI.

2 coiled-coil regions span residues 127–171 (DPIL…LQDY) and 250–299 (DTAR…AIST).

The protein belongs to the invasin protein D family.

The protein resides in the secreted. Functionally, required for invasion of epithelial cells, as well as for survival within host cells, escape from endocytic vesicles and subsequent actin-tail formation. Probably regulates the secretion of effectors BipB and BipC and their final integration into the target cell membrane. In Burkholderia mallei (strain NCTC 10247), this protein is Translocator protein BipD (bipD).